The sequence spans 66 residues: Large ribosomal subunit protein bL35 (66 aa).

This sequence belongs to the bacterial ribosomal protein bL35 family.

This chain is Large ribosomal subunit protein bL35, found in Brucella canis (strain ATCC 23365 / NCTC 10854 / RM-666).